A 68-amino-acid polypeptide reads, in one-letter code: Large ribosomal subunit protein bL35 (68 aa).

Basic residues-rich tracts occupy residues 1–11 (MPKLKTRSSAK) and 19–29 (SGKVKHGKAFA). Residues 1-54 (MPKLKTRSSAKKRFDVKKSGKVKHGKAFAKHLFTFSKTPKSKRSNRGTGHLRDM) form a disordered region.

The protein belongs to the bacterial ribosomal protein bL35 family.

The sequence is that of Large ribosomal subunit protein bL35 from Myxococcus xanthus (strain DK1622).